Consider the following 669-residue polypeptide: Glycerol uptake/efflux facilitator protein (669 aa).

The segment covering 1–16 (MSNPQKALNDFLSSES) has biased composition (polar residues). Disordered regions lie at residues 1–99 (MSNP…TYVP) and 123–147 (QDIN…RGQT). Topologically, residues 1-254 (MSNPQKALND…WSSVKNTYLK (254 aa)) are extracellular. A compositionally biased stretch (low complexity) spans 50–68 (NNNNNNNNNNNNSNNNNNG). Positions 72-81 (GNDDDYDYEM) are enriched in acidic residues. Composition is skewed to polar residues over residues 87–99 (SPQS…TYVP) and 133–147 (PSAS…RGQT). Position 150 is a phosphoserine (S150). A disordered region spans residues 167 to 215 (HTIPESHLSRRRSRSRATSNAGHSANTGATNGRTTGAQTNMESNESPRN). Phosphothreonine is present on T168. Residues 191–206 (ANTGATNGRTTGAQTN) show a composition bias toward low complexity. 2 positions are modified to phosphoserine: S209 and S212. The helical transmembrane segment at 255 to 275 (EFLAEFMGTMVMIIFGSAVVC) threads the bilayer. Residues 276–325 (QVNVAGKIQQDNFNVALDNLNVTGSSAETIDAMKSLTSLVSSVAGGTFDD) are Cytoplasmic-facing. The chain crosses the membrane as a helical span at residues 326–346 (VALGWAAAVVMGYFCAGGSAI). The Extracellular segment spans residues 347 to 369 (SGAHLNPSITLANLVYRGFPLKK). Positions 352-354 (NPS) match the NPA 1 motif. A helical membrane pass occupies residues 370–390 (VPYYFAGQLIGAFTGALILFI). Topologically, residues 391-446 (WYKRVLQEAYSDWWMNESVAGMFCVFPKPYLSSGRQFFSEFLCGAMLQAGTFALTD) are cytoplasmic. Residues 447-467 (PYTCLSSDVFPLMMFILIFII) traverse the membrane as a helical segment. Over 468 to 506 (NASMAYQTGTAMNLARDLGPRLALYAVGFDHKMLWVHHH) the chain is Extracellular. The short motif at 480–482 (NLA) is the NPA 2 element. The chain crosses the membrane as a helical span at residues 507–527 (HFFWVPMVGPFIGALMGGLVY). The Cytoplasmic segment spans residues 528–669 (DVCIYQGHES…SHYGNAKKVT (142 aa)). Disordered stretches follow at residues 591–615 (LQKT…VQFK) and 635–669 (DSIE…KKVT). A compositionally biased stretch (polar residues) spans 638–655 (ETASLGATTTDSIGLSDT).

It belongs to the MIP/aquaporin (TC 1.A.8) family.

It localises to the membrane. In terms of biological role, channel protein for glycerol. Has a role in both glycerol influx and efflux. Plays a role in osmoregulation: under osmotic stress the channel is apparently closed to allow accumulation of glycerol in the cell under hyperosmotic conditions. The chain is Glycerol uptake/efflux facilitator protein (FPS1) from Saccharomyces cerevisiae (strain ATCC 204508 / S288c) (Baker's yeast).